Here is a 21-residue protein sequence, read N- to C-terminus: Tricyclic peptide MS-271 (21 aa).

The segment at residues 1–9 (CLGVGSCND) is a cross-link (3-cysteinyl-aspartic acid (Cys-Asp)). 2 disulfides stabilise this stretch: Cys-1-Cys-13 and Cys-7-Cys-19. The residue at position 21 (Trp-21) is a D-tryptophan.

Its function is as follows. Inhibits chicken myosin light chain kinase with an IC(50) of 8 M. Does not inhibit bovine cAMP-dependent protein kinase or rat protein kinase C. Antibacterial activity against the Gram-positive bacteria B.subtilis, E.faecium and S.aureus. No antibacterial activity against the Gram-negative bacteria E.coli, K.pneumoniae, P.aeruginosa, P.vulgaris, S.sonnei and S.typhosa. No antifungal activity against C.albicans. The polypeptide is Tricyclic peptide MS-271 (Streptomyces sp).